The sequence spans 257 residues: MLAKRIVPCLDVREGKVVKGVQFRNHEIVGDIVPLAARYAEEGADELVFYDITASAHDRVIDKSWVSRVAERIDIPFCVAGGISSIEQAREKLAFGADKISVNSPALSDPSLIQRLQDEFGRQCIVIGIDSYYDEASDSYRVKQFTGDESATKDTQWFTQNWVEEVQKRGCGEIVLNVMNQDGVRQGYDLKQLSIIREICDVPLIASGGAGTMEHFKDVFEIAKVDAALAASVFHKGIIDINELKTYLAQHKIPTRR.

Catalysis depends on residues D11 and D130.

The protein belongs to the HisA/HisF family. As to quaternary structure, heterodimer of HisH and HisF.

It localises to the cytoplasm. It carries out the reaction 5-[(5-phospho-1-deoxy-D-ribulos-1-ylimino)methylamino]-1-(5-phospho-beta-D-ribosyl)imidazole-4-carboxamide + L-glutamine = D-erythro-1-(imidazol-4-yl)glycerol 3-phosphate + 5-amino-1-(5-phospho-beta-D-ribosyl)imidazole-4-carboxamide + L-glutamate + H(+). It participates in amino-acid biosynthesis; L-histidine biosynthesis; L-histidine from 5-phospho-alpha-D-ribose 1-diphosphate: step 5/9. Functionally, IGPS catalyzes the conversion of PRFAR and glutamine to IGP, AICAR and glutamate. The HisF subunit catalyzes the cyclization activity that produces IGP and AICAR from PRFAR using the ammonia provided by the HisH subunit. The sequence is that of Imidazole glycerol phosphate synthase subunit HisF from Shewanella woodyi (strain ATCC 51908 / MS32).